The primary structure comprises 227 residues: Phosphoglycolate phosphatase (227 aa).

The active-site Nucleophile is the Asp-11. Asp-11 and Asp-13 together coordinate Mg(2+). Position 155 (Lys-155) interacts with substrate. Mg(2+)-binding residues include Asp-178 and Asp-182.

It belongs to the archaeal SPP-like hydrolase family. Mg(2+) is required as a cofactor.

It carries out the reaction 2-phosphoglycolate + H2O = glycolate + phosphate. Functionally, catalyzes the dephosphorylation of 2-phosphoglycolate. In Haloarcula marismortui (strain ATCC 43049 / DSM 3752 / JCM 8966 / VKM B-1809) (Halobacterium marismortui), this protein is Phosphoglycolate phosphatase.